The chain runs to 202 residues: Probable nicotinate-nucleotide adenylyltransferase (202 aa).

The protein belongs to the NadD family.

The enzyme catalyses nicotinate beta-D-ribonucleotide + ATP + H(+) = deamido-NAD(+) + diphosphate. The protein operates within cofactor biosynthesis; NAD(+) biosynthesis; deamido-NAD(+) from nicotinate D-ribonucleotide: step 1/1. Its function is as follows. Catalyzes the reversible adenylation of nicotinate mononucleotide (NaMN) to nicotinic acid adenine dinucleotide (NaAD). The polypeptide is Probable nicotinate-nucleotide adenylyltransferase (Clostridium perfringens (strain ATCC 13124 / DSM 756 / JCM 1290 / NCIMB 6125 / NCTC 8237 / Type A)).